The primary structure comprises 504 residues: Protoporphyrinogen oxidase, mitochondrial (504 aa).

Residues 20 to 25, 43 to 44, Lys51, and 65 to 68 contribute to the FAD site; these read GAGVSG, EA, and GANT. The interval 213-232 is disordered; sequence SPKNEKKQGPPKTSANKKRQ. Residues Val264 and 473–475 contribute to the FAD site; that span reads LSV.

It belongs to the protoporphyrinogen/coproporphyrinogen oxidase family. Protoporphyrinogen oxidase subfamily. FAD serves as cofactor.

The protein resides in the mitochondrion. The catalysed reaction is protoporphyrinogen IX + 3 O2 = protoporphyrin IX + 3 H2O2. It participates in porphyrin-containing compound metabolism; protoporphyrin-IX biosynthesis; protoporphyrin-IX from protoporphyrinogen-IX: step 1/1. Inhibited by the herbicide acifluorfen. Functionally, catalyzes the 6-electron oxidation of protoporphyrinogen-IX to form protoporphyrin-IX. Provides precursor for the mitochondrial and plastidic heme synthesis and the predominant chlorophyll synthesis in plastids. This is Protoporphyrinogen oxidase, mitochondrial (PPXII) from Nicotiana tabacum (Common tobacco).